A 151-amino-acid chain; its full sequence is Protein INO4 (151 aa).

The region spanning 45–97 (QIRINHVSSEKKRRELERAIFDELVAVVPDLQPQESRSELIIYLKSLSYLSWL) is the bHLH domain. Positions 112 to 137 (HEAKTGSSSSSDPVQEQNGNIRDLVP) are disordered. The segment covering 116–131 (TGSSSSSDPVQEQNGN) has biased composition (polar residues).

Efficient DNA binding requires dimerization with another bHLH protein.

The protein localises to the nucleus. Functionally, transcriptional activator of phospholipid synthetic genes (such as INO1, CHO1/PSS, CHO2/PEM1, OPI3/PEM2, etc.). The sequence is that of Protein INO4 (INO4) from Saccharomyces cerevisiae (strain ATCC 204508 / S288c) (Baker's yeast).